The primary structure comprises 1323 residues: PAS domain-containing serine/threonine-protein kinase (1323 aa).

M1 is modified (N-acetylmethionine). Residue S19 is modified to Phosphoserine. A disordered region spans residues 20 to 47 (LPLPVSAEGPAAQTTAEPSRSFSSAHRH). Residues 31 to 43 (AQTTAEPSRSFSS) show a composition bias toward polar residues. Position 34 is a phosphothreonine (T34). 2 PAS domains span residues 119 to 190 (SSPL…MEAD) and 335 to 402 (YRAS…SLQL). The residue at position 582 (S582) is a Phosphoserine. The segment at 837–857 (AASDRESPGHVPSTLDAGPED) is disordered. S939 is modified (phosphoserine). Positions 999–1251 (YSTMSPLGSG…LEKLVTDPWV (253 aa)) constitute a Protein kinase domain. ATP-binding positions include 1005-1013 (LGSGAFGFV), K1028, and 1082-1089 (EKHGSGLD). The Proton acceptor role is filled by D1128. D1146 is a binding site for ATP. T1161 and T1165 each carry phosphothreonine; by autocatalysis. The tract at residues 1298–1323 (CGGPVPGEAPNGQGCLHPGDPRLLTS) is disordered.

Belongs to the protein kinase superfamily. CAMK Ser/Thr protein kinase family. Autophosphorylated on Thr-1161 and Thr-1165. Autophosphorylation is activated by phospholipids. As to expression, ubiquitously expressed, with slightly higher expression in brain, prostate and testis. Reduced expression was found in placenta. Present in germ cells of testis and in the midpiece of sperm tails (at protein level).

The protein resides in the cytoplasm. It is found in the nucleus. It carries out the reaction L-seryl-[protein] + ATP = O-phospho-L-seryl-[protein] + ADP + H(+). The catalysed reaction is L-threonyl-[protein] + ATP = O-phospho-L-threonyl-[protein] + ADP + H(+). Protein kinase activity is inhibited by the first PAS domain: binding of an unidentified ligand desinhibits the protein kinase activity. May be activated by autophosphorylation on Thr-1161 and Thr-1165. The activating role of autophosphorylation at Thr-1161 is unclear: according to a report, autophosphorylation at Thr-1161 does not play a major role in activation. Autophosphorylation is enhanced upon phosphatidylinositol monophosphate (phosphatidylinositol 4-phosphate) binding and inhibited upon phosphatidylinositol bi- and tri-phosphate binding. In contrast, phosphorylation of target proteins is inhibited upon all phosphatidylinositol-binding (phosphatidylinositol mono- bi- and tri-phosphate). In terms of biological role, serine/threonine-protein kinase involved in energy homeostasis and protein translation. Phosphorylates EEF1A1, GYS1, PDX1 and RPS6. Probably plays a role under changing environmental conditions (oxygen, glucose, nutrition), rather than under standard conditions. Acts as a sensor involved in energy homeostasis: regulates glycogen synthase synthesis by mediating phosphorylation of GYS1, leading to GYS1 inactivation. May be involved in glucose-stimulated insulin production in pancreas and regulation of glucagon secretion by glucose in alpha cells; however such data require additional evidences. May play a role in regulation of protein translation by phosphorylating EEF1A1, leading to increase translation efficiency. May also participate in respiratory regulation. The chain is PAS domain-containing serine/threonine-protein kinase (PASK) from Homo sapiens (Human).